Consider the following 183-residue polypeptide: Crossover junction endodeoxyribonuclease RuvC (183 aa).

Active-site residues include Asp7, Glu66, and Asp138. Positions 7, 66, and 138 each coordinate Mg(2+).

This sequence belongs to the RuvC family. As to quaternary structure, homodimer which binds Holliday junction (HJ) DNA. The HJ becomes 2-fold symmetrical on binding to RuvC with unstacked arms; it has a different conformation from HJ DNA in complex with RuvA. In the full resolvosome a probable DNA-RuvA(4)-RuvB(12)-RuvC(2) complex forms which resolves the HJ. Mg(2+) is required as a cofactor.

It localises to the cytoplasm. It carries out the reaction Endonucleolytic cleavage at a junction such as a reciprocal single-stranded crossover between two homologous DNA duplexes (Holliday junction).. The RuvA-RuvB-RuvC complex processes Holliday junction (HJ) DNA during genetic recombination and DNA repair. Endonuclease that resolves HJ intermediates. Cleaves cruciform DNA by making single-stranded nicks across the HJ at symmetrical positions within the homologous arms, yielding a 5'-phosphate and a 3'-hydroxyl group; requires a central core of homology in the junction. The consensus cleavage sequence is 5'-(A/T)TT(C/G)-3'. Cleavage occurs on the 3'-side of the TT dinucleotide at the point of strand exchange. HJ branch migration catalyzed by RuvA-RuvB allows RuvC to scan DNA until it finds its consensus sequence, where it cleaves and resolves the cruciform DNA. This Burkholderia ambifaria (strain ATCC BAA-244 / DSM 16087 / CCUG 44356 / LMG 19182 / AMMD) (Burkholderia cepacia (strain AMMD)) protein is Crossover junction endodeoxyribonuclease RuvC.